Reading from the N-terminus, the 383-residue chain is MSITLNEVKRREKGLKIIKDKIETDGIDSLIDLTGLAGGFDITPEDISLLETYAGPAVYEQKVQKLGIKHLGGEKILPVNRTTSGIVAMIIALVKPGTKIVHFLAKKPAHPSIPRTAKLVGADYEEYTNLDEFKIDDNTSLVFITGTTMDLEVISVEDFKRVIKQAKEKDVIVAVDDASGARIRRAVYNQPTAIDLGADISVTSTDKLMEGPRGGLMAGSTEIIDKIKLVVNQYGLEAQAPLIVGMIKGLEKYSPERIQEAFKQKDELYQKLLDKQLNPQTTPTGFMFKEEEIKAEVEKRGAKVDMDADVIATVYSMLLIDNYNIITIPAVGMPGASKTVRFDWAAKDSDKLTMDELVSAVCDTFDKTVEVCKNNDFESVLYN.

At Lys-207 the chain carries N6-(pyridoxal phosphate)lysine.

It belongs to the UPF0425 family. Pyridoxal 5'-phosphate is required as a cofactor.

This is UPF0425 pyridoxal phosphate-dependent protein Msp_0916 from Methanosphaera stadtmanae (strain ATCC 43021 / DSM 3091 / JCM 11832 / MCB-3).